The primary structure comprises 330 residues: Replication factor C small subunit (330 aa).

An ATP-binding site is contributed by 48-55; the sequence is GPPGTGKT.

The protein belongs to the activator 1 small subunits family. RfcS subfamily. In terms of assembly, heteropentamer composed of four small subunits (RfcS) and one large subunit (RfcL). A homotetramer of this subunit interacts with PCNA heterodimer PCNA1-PCNA2.

Part of the RFC clamp loader complex which loads the PCNA sliding clamp onto DNA. The complex possesses DNA-dependent ATPase activity. The protein is Replication factor C small subunit (rfcS) of Saccharolobus solfataricus (strain ATCC 35092 / DSM 1617 / JCM 11322 / P2) (Sulfolobus solfataricus).